The following is a 445-amino-acid chain: Phosphoglucosamine mutase (445 aa).

Ser-99 (phosphoserine intermediate) is an active-site residue. Mg(2+) is bound by residues Ser-99, Asp-242, Asp-244, and Asp-246. The residue at position 99 (Ser-99) is a Phosphoserine.

This sequence belongs to the phosphohexose mutase family. Requires Mg(2+) as cofactor. Post-translationally, activated by phosphorylation.

It carries out the reaction alpha-D-glucosamine 1-phosphate = D-glucosamine 6-phosphate. In terms of biological role, catalyzes the conversion of glucosamine-6-phosphate to glucosamine-1-phosphate. The protein is Phosphoglucosamine mutase of Helicobacter acinonychis (strain Sheeba).